The following is an 802-amino-acid chain: Chondroitin sulfate synthase 1 (802 aa).

Over 1–7 (MAARGRR) the chain is Cytoplasmic. The helical; Signal-anchor for type II membrane protein transmembrane segment at 8–28 (AWLSVLLGLVLGFVLASRLVL) threads the bilayer. Residues 29 to 802 (PRASELKRAG…SNNNGSVRTA (774 aa)) are Lumenal-facing. The disordered stretch occupies residues 34 to 82 (LKRAGPRRRASPEGCRSGQAAASQAGGARGDARGAQLWPPGSDPDGGPR). 2 stretches are compositionally biased toward low complexity: residues 49–59 (RSGQAAASQAG) and 66–78 (RGAQLWPPGSDPD). N-linked (GlcNAc...) asparagine glycosylation is found at asparagine 189 and asparagine 623. The a divalent metal cation site is built by aspartate 633 and histidine 747. An N-linked (GlcNAc...) asparagine glycan is attached at asparagine 796.

It belongs to the chondroitin N-acetylgalactosaminyltransferase family. Co(2+) is required as a cofactor. Requires Mn(2+) as cofactor. It depends on Cd(2+) as a cofactor. In terms of tissue distribution, ubiquitous, with the highest levels in placenta. Detected at low levels in brain, heart, skeletal muscle, colon, thymus, spleen, kidney, liver, adrenal gland, mammary gland, stomach, small intestine, lung and peripheral blood leukocytes.

It is found in the golgi apparatus. The protein resides in the golgi stack membrane. It localises to the secreted. It carries out the reaction 3-O-(beta-D-GlcA-(1-&gt;3)-beta-D-GalNAc-(1-&gt;4)-beta-D-GlcA-(1-&gt;3)-beta-D-Gal-(1-&gt;3)-beta-D-Gal-(1-&gt;4)-beta-D-Xyl)-L-seryl-[protein] + UDP-N-acetyl-alpha-D-galactosamine = 3-O-(beta-D-GalNAc-(1-&gt;4)-beta-D-GlcA-(1-&gt;3)-beta-D-GalNAc-(1-&gt;4)-beta-D-GlcA-(1-&gt;3)-beta-D-Gal-(1-&gt;3)-beta-D-Gal-(1-&gt;4)-beta-D-Xyl)-L-seryl-[protein] + UDP + H(+). It catalyses the reaction 3-O-{beta-D-GlcA-(1-&gt;3)-[beta-D-GalNAc-(1-&gt;4)-beta-D-GlcA-(1-&gt;3)](n)-beta-D-GalNAc-(1-&gt;4)-beta-D-GlcA-(1-&gt;3)-beta-D-Gal-(1-&gt;3)-beta-D-Gal-(1-&gt;4)-beta-D-Xyl}-L-seryl-[protein] + UDP-N-acetyl-alpha-D-galactosamine = 3-O-{[beta-D-GalNAc-(1-&gt;4)-beta-D-GlcA-(1-&gt;3)](n+1)-beta-D-GalNAc-(1-&gt;4)-beta-D-GlcA-(1-&gt;3)-beta-D-Gal-(1-&gt;3)-beta-D-Gal-(1-&gt;4)-beta-D-Xyl}-L-seryl-[protein] + UDP + H(+). The enzyme catalyses 3-O-(beta-D-GalNAc-(1-&gt;4)-beta-D-GlcA-(1-&gt;3)-beta-D-Gal-(1-&gt;3)-beta-D-Gal-(1-&gt;4)-beta-D-Xyl)-L-seryl-[protein] + UDP-alpha-D-glucuronate = 3-O-(beta-D-GlcA-(1-&gt;3)-beta-D-GalNAc-(1-&gt;4)-beta-D-GlcA-(1-&gt;3)-beta-D-Gal-(1-&gt;3)-beta-D-Gal-(1-&gt;4)-beta-D-Xyl)-L-seryl-[protein] + UDP + H(+). The catalysed reaction is 3-O-{[beta-D-GalNAc-(1-&gt;4)-beta-D-GlcA-(1-&gt;3)](n)-beta-D-GalNAc-(1-&gt;4)-beta-D-GlcA-(1-&gt;3)-beta-D-Gal-(1-&gt;3)-beta-D-Gal-(1-&gt;4)-beta-D-Xyl}-L-seryl-[protein] + UDP-alpha-D-glucuronate = 3-O-{beta-D-GlcA-(1-&gt;3)-[beta-D-GalNAc-(1-&gt;4)-beta-D-GlcA-(1-&gt;3)](n)-beta-D-GalNAc-(1-&gt;4)-beta-D-GlcA-(1-&gt;3)-beta-D-Gal-(1-&gt;3)-beta-D-Gal-(1-&gt;4)-beta-D-Xyl}-L-seryl-[protein] + UDP + H(+). Its function is as follows. Has both beta-1,3-glucuronic acid and beta-1,4-N-acetylgalactosamine transferase activity. Transfers glucuronic acid (GlcUA) from UDP-GlcUA and N-acetylgalactosamine (GalNAc) from UDP-GalNAc to the non-reducing end of the elongating chondroitin polymer. Involved in the negative control of osteogenesis likely through the modulation of NOTCH signaling. This is Chondroitin sulfate synthase 1 from Homo sapiens (Human).